The sequence spans 719 residues: ATP-dependent RNA helicase p62 (719 aa).

The segment at 94–234 is disordered; that stretch reads AQSQRAFRDS…GSQDLPMRPV (141 aa). Basic and acidic residues-rich tracts occupy residues 99-108 and 137-171; these read AFRDSSKPDS and EEIK…DRRG. Residues 172–188 are compositionally biased toward gly residues; that stretch reads GGGGGNRFGGGGGGGDY. Basic and acidic residues predominate over residues 194–205; it reads GRVEKRRDDRGG. A compositionally biased stretch (gly residues) spans 206–226; the sequence is GNRFGGGGGFGDRRGGGGGGS. The short motif at 281-309 is the Q motif element; it reads QDFSEVHLPDYVMKEIRRQGYKAPTAIQA. One can recognise a Helicase ATP-binding domain in the interval 312–487; sequence WPIAMSGSNF…EDFLGNYIQI (176 aa). 325–332 serves as a coordination point for ATP; the sequence is AKTGSGKT. The DEAD box motif lies at 435–438; that stretch reads DEAD. Residues 519-664 enclose the Helicase C-terminal domain; sequence LLSDIYDTSE…EINPALENLA (146 aa). A disordered region spans residues 689-719; sequence GGGFKKGSLSNGRGFGGGGGGGGEGRHSRFD. Residues 701–711 show a composition bias toward gly residues; it reads RGFGGGGGGGG.

The protein belongs to the DEAD box helicase family. DDX5/DBP2 subfamily. In terms of assembly, interacts with Fmr1 to form the RNA-induced silencing complex (RISC), a ribonucleoprotein (RNP) complex involved in translation regulation, other components of the complex are RpL5, RpL11, AGO2 and Dcr-1.

The protein localises to the nucleus. The protein resides in the nucleolus. It localises to the cytoplasm. Its subcellular location is the cytosol. The enzyme catalyses ATP + H2O = ADP + phosphate + H(+). As an RNA helicase, unwinds RNA and alters RNA structures through ATP binding and hydrolysis. Involved in multiple cellular processes, including pre-mRNA splicing, alternative splicing, rRNA processing and miRNA processing, as well as transcription regulation. Plays a role in innate immunity. Specifically restricts bunyavirus infection, including Rift Valley fever virus (RVFV) or La Crosse virus (LACV), but not vesicular stomatitis virus (VSV), in an interferon- and DROSHA-independent manner. This chain is ATP-dependent RNA helicase p62 (Rm62), found in Drosophila melanogaster (Fruit fly).